The following is a 613-amino-acid chain: Dihydroxy-acid dehydratase (613 aa).

Residue Asp81 participates in Mg(2+) binding. Cys122 serves as a coordination point for [2Fe-2S] cluster. Mg(2+) contacts are provided by Asp123 and Lys124. Lys124 bears the N6-carboxylysine mark. Position 195 (Cys195) interacts with [2Fe-2S] cluster. A Mg(2+)-binding site is contributed by Glu491. Residue Ser517 is the Proton acceptor of the active site.

The protein belongs to the IlvD/Edd family. Homodimer. Requires [2Fe-2S] cluster as cofactor. It depends on Mg(2+) as a cofactor.

The enzyme catalyses (2R)-2,3-dihydroxy-3-methylbutanoate = 3-methyl-2-oxobutanoate + H2O. The catalysed reaction is (2R,3R)-2,3-dihydroxy-3-methylpentanoate = (S)-3-methyl-2-oxopentanoate + H2O. Its pathway is amino-acid biosynthesis; L-isoleucine biosynthesis; L-isoleucine from 2-oxobutanoate: step 3/4. It participates in amino-acid biosynthesis; L-valine biosynthesis; L-valine from pyruvate: step 3/4. In terms of biological role, functions in the biosynthesis of branched-chain amino acids. Catalyzes the dehydration of (2R,3R)-2,3-dihydroxy-3-methylpentanoate (2,3-dihydroxy-3-methylvalerate) into 2-oxo-3-methylpentanoate (2-oxo-3-methylvalerate) and of (2R)-2,3-dihydroxy-3-methylbutanoate (2,3-dihydroxyisovalerate) into 2-oxo-3-methylbutanoate (2-oxoisovalerate), the penultimate precursor to L-isoleucine and L-valine, respectively. This chain is Dihydroxy-acid dehydratase, found in Aeromonas hydrophila subsp. hydrophila (strain ATCC 7966 / DSM 30187 / BCRC 13018 / CCUG 14551 / JCM 1027 / KCTC 2358 / NCIMB 9240 / NCTC 8049).